The chain runs to 143 residues: Large ribosomal subunit protein uL15 (143 aa).

The tract at residues 1 to 56 is disordered; sequence MELNSIKPAEGSKHAKRRVGRGIGSGLGKTAGRGHKGQKSRSGGYHKVGFEGGQMP. Residues 21–31 show a composition bias toward gly residues; it reads RGIGSGLGKTA.

Belongs to the universal ribosomal protein uL15 family. Part of the 50S ribosomal subunit.

Functionally, binds to the 23S rRNA. The chain is Large ribosomal subunit protein uL15 from Delftia acidovorans (strain DSM 14801 / SPH-1).